The primary structure comprises 118 residues: Large ribosomal subunit protein bL20 (118 aa).

The protein belongs to the bacterial ribosomal protein bL20 family.

Functionally, binds directly to 23S ribosomal RNA and is necessary for the in vitro assembly process of the 50S ribosomal subunit. It is not involved in the protein synthesizing functions of that subunit. In Syntrophotalea carbinolica (strain DSM 2380 / NBRC 103641 / GraBd1) (Pelobacter carbinolicus), this protein is Large ribosomal subunit protein bL20.